The primary structure comprises 262 residues: Ribosomal RNA small subunit methyltransferase A (262 aa).

Residues Asn-14, Leu-16, Gly-41, Glu-63, Asp-85, and Asn-105 each contribute to the S-adenosyl-L-methionine site.

Belongs to the class I-like SAM-binding methyltransferase superfamily. rRNA adenine N(6)-methyltransferase family. RsmA subfamily.

It is found in the cytoplasm. It carries out the reaction adenosine(1518)/adenosine(1519) in 16S rRNA + 4 S-adenosyl-L-methionine = N(6)-dimethyladenosine(1518)/N(6)-dimethyladenosine(1519) in 16S rRNA + 4 S-adenosyl-L-homocysteine + 4 H(+). Specifically dimethylates two adjacent adenosines (A1518 and A1519) in the loop of a conserved hairpin near the 3'-end of 16S rRNA in the 30S particle. May play a critical role in biogenesis of 30S subunits. The chain is Ribosomal RNA small subunit methyltransferase A from Maridesulfovibrio salexigens (strain ATCC 14822 / DSM 2638 / NCIMB 8403 / VKM B-1763) (Desulfovibrio salexigens).